The primary structure comprises 211 residues: ATP phosphoribosyltransferase (211 aa).

Belongs to the ATP phosphoribosyltransferase family. Short subfamily. As to quaternary structure, heteromultimer composed of HisG and HisZ subunits.

It localises to the cytoplasm. The enzyme catalyses 1-(5-phospho-beta-D-ribosyl)-ATP + diphosphate = 5-phospho-alpha-D-ribose 1-diphosphate + ATP. It participates in amino-acid biosynthesis; L-histidine biosynthesis; L-histidine from 5-phospho-alpha-D-ribose 1-diphosphate: step 1/9. Catalyzes the condensation of ATP and 5-phosphoribose 1-diphosphate to form N'-(5'-phosphoribosyl)-ATP (PR-ATP). Has a crucial role in the pathway because the rate of histidine biosynthesis seems to be controlled primarily by regulation of HisG enzymatic activity. This is ATP phosphoribosyltransferase from Bacillus cereus (strain B4264).